The chain runs to 580 residues: High affinity choline transporter 1 (580 aa).

Residues 1–6 (MAFHVE) are Extracellular-facing. The helical transmembrane segment at 7 to 27 (GLIAIIVFYLLILLVGIWAAW) threads the bilayer. The Cytoplasmic segment spans residues 28-48 (RTKNSGSAEERSEAIIVGGRD). Residues 49 to 69 (IGLLVGGFTMTATWVGGGYIN) form a helical membrane-spanning segment. The Extracellular portion of the chain corresponds to 70-81 (GTAEAVYVPGYG). The chain crosses the membrane as a helical span at residues 82-102 (LAWAQAPIGYSLSLILGGLFF). Residues 103-125 (AKPMRSKGYVTMLDPFQQIYGKR) lie on the Cytoplasmic side of the membrane. A helical membrane pass occupies residues 126–146 (MGGLLFIPALMGEMFWAAAIF). Topologically, residues 147-164 (SALGATISVIIDVDMHIS) are extracellular. Residues 165–185 (VIISALIATLYTLVGGLYSVA) form a helical membrane-spanning segment. Residues 186–191 (YTDVVQ) lie on the Cytoplasmic side of the membrane. A helical transmembrane segment spans residues 192 to 212 (LFCIFVGLWISVPFALSHPAV). Topologically, residues 213-237 (ADIGFTAVHAKYQKPWLGTVDSSEV) are extracellular. A helical membrane pass occupies residues 238 to 258 (YSWLDSFLLLMLGGIPWQAYF). The Cytoplasmic portion of the chain corresponds to 259–274 (QRVLSSSSATYAQVLS). A helical membrane pass occupies residues 275-295 (FLAAFGCLVMAIPAILIGAIG). At 296 to 317 (ASTDWNQTAYGLPDPKTTEEAD) the chain is on the extracellular side. Asn-301 is a glycosylation site (N-linked (GlcNAc...) asparagine). Residues 318 to 338 (MILPIVLQYLCPVYISFFGLG) form a helical membrane-spanning segment. Residues 339–376 (AVSAAVMSSADSSILSASSMFARNIYQLSFRQNASDKE) are Cytoplasmic-facing. The chain crosses the membrane as a helical span at residues 377–397 (IVWVMRITVFVFGASATAMAL). Residues 398–406 (LTKTVYGLW) are Extracellular-facing. Residues 407–427 (YLSSDLVYIVIFPQLLCVLFV) form a helical membrane-spanning segment. Topologically, residues 428 to 435 (KGTNTYGA) are cytoplasmic. Residues 436-456 (VAGYVSGLFLRITGGEPYLYL) traverse the membrane as a helical segment. Over 457–481 (QPLIFYPGYYPDDNGIYNQKFPFKT) the chain is Extracellular. The chain crosses the membrane as a helical span at residues 482–502 (LAMVTSFLTNICISYLAKYLF). Positions 502 to 580 (FESGTLPPKL…EGSGTEDNLQ (79 aa)) are mediates interaction with SEC14L1. The Cytoplasmic portion of the chain corresponds to 503 to 580 (ESGTLPPKLD…EGSGTEDNLQ (78 aa)). Residues 527 to 532 (DKTILV) carry the Dileucine-like motif motif.

Belongs to the sodium:solute symporter (SSF) (TC 2.A.21) family. In terms of assembly, homooligomerizes at cell surface. Interacts with SEC14L1; may regulate SLC5A7. Post-translationally, phosphorylated. In terms of tissue distribution, expressed in putamen, spinal cord and medulla. Expressed in cholinergic neurons.

It is found in the presynaptic cell membrane. The protein localises to the cell projection. It localises to the axon. The protein resides in the early endosome membrane. Its subcellular location is the cytoplasmic vesicle. It is found in the secretory vesicle. The protein localises to the synaptic vesicle membrane. It carries out the reaction choline(out) + n Na(+)(out) = choline(in) + n Na(+)(in). With respect to regulation, choline uptake activity is regulated by SLC5A7/CHT1 internalization (inactive form) from the cell surface and recycling of internalized SLC5A7/CHT1 into the cell surface (active form). Activated by extracellular chloride ion. Specifically inhibited by nanomolar concentrations of hemicholinium 3. In terms of biological role, high-affinity Na(+)-coupled choline transmembrane symporter. Functions as an electrogenic, voltage-dependent transporter with variable charge/choline stoichiometry. Choline uptake and choline-induced current is also Cl(-)-dependent where Cl(-) is likely a regulatory ion rather than cotransported ion. Plays a critical role in acetylcholine (ACh) synthesis by taking up the substrate choline from the synaptic cleft into the presynaptic nerve terminals after neurotransmitter release. SLC5A7/CHT1-mediated choline high-affinity transport in cholinergic neurons is the rate-limiting step for production of ACh, thereby facilitating communication by subsequent action potentials. Localized predominantly in presynaptic terminal intracellular organelles, and translocated to the plasma membrane in active form in response to neuronal activity. This is High affinity choline transporter 1 from Homo sapiens (Human).